A 398-amino-acid polypeptide reads, in one-letter code: tRNA (guanine-N(7)-)-methyltransferase (398 aa).

S-adenosyl-L-methionine contacts are provided by Glu124, Glu149, and Asp176. Substrate is bound at residue Asp232.

Belongs to the class I-like SAM-binding methyltransferase superfamily. TrmB family.

It catalyses the reaction guanosine(46) in tRNA + S-adenosyl-L-methionine = N(7)-methylguanosine(46) in tRNA + S-adenosyl-L-homocysteine. It participates in tRNA modification; N(7)-methylguanine-tRNA biosynthesis. In terms of biological role, catalyzes the formation of N(7)-methylguanine at position 46 (m7G46) in tRNA. This chain is tRNA (guanine-N(7)-)-methyltransferase, found in Helicobacter acinonychis (strain Sheeba).